The following is a 207-amino-acid chain: Ras-related protein Rab-8A (207 aa).

The GTP site is built by Ser-17, Gly-18, Val-19, Gly-20, Lys-21, Thr-22, Cys-23, Ser-39, and Thr-40. Mg(2+) is bound at residue Thr-22. Short sequence motifs (switch) lie at residues 31–45 and 63–80; these read DAFNATFISTIGIDF and DTAGQERFRTITTAYYRG. Positions 40 and 63 each coordinate Mg(2+). GTP contacts are provided by Gly-66, Asn-121, Lys-122, Asp-124, Ala-152, and Lys-153. Cys-204 is modified (cysteine methyl ester). Cys-204 carries S-geranylgeranyl cysteine lipidation. Residues 205 to 207 constitute a propeptide, removed in mature form; the sequence is VLL.

It belongs to the small GTPase superfamily. Rab family. Mg(2+) is required as a cofactor.

Its subcellular location is the cell membrane. It localises to the golgi apparatus. It is found in the endosome membrane. The protein localises to the recycling endosome membrane. The protein resides in the cell projection. Its subcellular location is the cilium. It localises to the cytoplasmic vesicle. It is found in the phagosome membrane. The protein localises to the cytoplasm. The protein resides in the cytoskeleton. Its subcellular location is the microtubule organizing center. It localises to the centrosome. It is found in the centriole. The protein localises to the cilium basal body. The protein resides in the midbody. It catalyses the reaction GTP + H2O = GDP + phosphate + H(+). Regulated by guanine nucleotide exchange factors (GEFs) which promote the exchange of bound GDP for free GTP, GTPase activating proteins (GAPs) which increase the GTP hydrolysis activity, and GDP dissociation inhibitors (GDIs) which inhibit the dissociation of the nucleotide from the GTPase. Activated in response to insulin. Functionally, the small GTPases Rab are key regulators of intracellular membrane trafficking, from the formation of transport vesicles to their fusion with membranes. Rabs cycle between an inactive GDP-bound form and an active GTP-bound form that is able to recruit to membranes different sets of downstream effectors directly responsible for vesicle formation, movement, tethering and fusion. RAB8A is involved in polarized vesicular trafficking and neurotransmitter release. Together with RAB11A, RAB3IP, the exocyst complex, PARD3, PRKCI, ANXA2, CDC42 and DNMBP promotes transcytosis of PODXL to the apical membrane initiation sites (AMIS), apical surface formation and lumenogenesis. Regulates the compacted morphology of the Golgi. Together with MYO5B and RAB11A participates in epithelial cell polarization. Also involved in membrane trafficking to the cilium and ciliogenesis. Together with MICALL2, may also regulate adherens junction assembly. May play a role in insulin-induced transport to the plasma membrane of the glucose transporter GLUT4 and therefore play a role in glucose homeostasis. Involved in autophagy. Participates in the export of a subset of neosynthesized proteins through a Rab8-Rab10-Rab11-dependent endososomal export route. Targeted to and stabilized on stressed lysosomes through LRRK2 phosphorylation. Suppresses stress-induced lysosomal enlargement through EHBP1 and EHNP1L1 effector proteins. The chain is Ras-related protein Rab-8A (RAB8A) from Gallus gallus (Chicken).